Consider the following 348-residue polypeptide: Heat-inducible transcription repressor HrcA (348 aa).

Belongs to the HrcA family.

Its function is as follows. Negative regulator of class I heat shock genes (grpE-dnaK-dnaJ and groELS operons). Prevents heat-shock induction of these operons. In Ruminiclostridium cellulolyticum (strain ATCC 35319 / DSM 5812 / JCM 6584 / H10) (Clostridium cellulolyticum), this protein is Heat-inducible transcription repressor HrcA.